Here is an 803-residue protein sequence, read N- to C-terminus: Translation initiation factor IF-2 (803 aa).

Disordered stretches follow at residues 93–123 (TKPV…LNEK) and 138–206 (EVKE…ASAK). Polar residues predominate over residues 111-121 (VPPTSDTTNLN). Residues 138–155 (EVKEEAKKTPSEKKETPK) show a composition bias toward basic and acidic residues. Residues 156 to 167 (KGPRKETRRSRK) are compositionally biased toward basic residues. The segment covering 168–188 (PDKEDKWEREELHMTKLVEER) has biased composition (basic and acidic residues). In terms of domain architecture, tr-type G spans 302–471 (PRAPVVTIMG…LLQAEVLELK (170 aa)). Positions 311–318 (GHVDHGKT) are G1. 311–318 (GHVDHGKT) serves as a coordination point for GTP. Residues 336–340 (GITQH) are G2. Residues 357-360 (DTPG) form a G3 region. GTP contacts are provided by residues 357–361 (DTPGH) and 411–414 (NKID). The G4 stretch occupies residues 411-414 (NKID). The G5 stretch occupies residues 447–449 (SAK).

Belongs to the TRAFAC class translation factor GTPase superfamily. Classic translation factor GTPase family. IF-2 subfamily.

The protein localises to the cytoplasm. One of the essential components for the initiation of protein synthesis. Protects formylmethionyl-tRNA from spontaneous hydrolysis and promotes its binding to the 30S ribosomal subunits. Also involved in the hydrolysis of GTP during the formation of the 70S ribosomal complex. This is Translation initiation factor IF-2 from Coxiella burnetii (strain RSA 493 / Nine Mile phase I).